The primary structure comprises 272 residues: Dermonecrotic toxin StSicTox-betaIF1 (272 aa).

The active site involves H5. Mg(2+)-binding residues include E25 and D27. The Nucleophile role is filled by H41. Intrachain disulfides connect C45–C51 and C47–C189. Position 85 (D85) interacts with Mg(2+).

The protein belongs to the arthropod phospholipase D family. Class II subfamily. Mg(2+) is required as a cofactor. As to expression, expressed by the venom gland.

The protein resides in the secreted. The catalysed reaction is an N-(acyl)-sphingosylphosphocholine = an N-(acyl)-sphingosyl-1,3-cyclic phosphate + choline. The enzyme catalyses an N-(acyl)-sphingosylphosphoethanolamine = an N-(acyl)-sphingosyl-1,3-cyclic phosphate + ethanolamine. It catalyses the reaction a 1-acyl-sn-glycero-3-phosphocholine = a 1-acyl-sn-glycero-2,3-cyclic phosphate + choline. It carries out the reaction a 1-acyl-sn-glycero-3-phosphoethanolamine = a 1-acyl-sn-glycero-2,3-cyclic phosphate + ethanolamine. Its function is as follows. Dermonecrotic toxins cleave the phosphodiester linkage between the phosphate and headgroup of certain phospholipids (sphingolipid and lysolipid substrates), forming an alcohol (often choline) and a cyclic phosphate. This toxin acts on sphingomyelin (SM). It may also act on ceramide phosphoethanolamine (CPE), lysophosphatidylcholine (LPC) and lysophosphatidylethanolamine (LPE), but not on lysophosphatidylserine (LPS), and lysophosphatidylglycerol (LPG). It acts by transphosphatidylation, releasing exclusively cyclic phosphate products as second products. Induces dermonecrosis, hemolysis, increased vascular permeability, edema, inflammatory response, and platelet aggregation. This Sicarius terrosus (Cave spider) protein is Dermonecrotic toxin StSicTox-betaIF1.